The chain runs to 487 residues: E3 ubiquitin-protein ligase RNF8 (487 aa).

The 55-residue stretch at 38–92 (VTIGRGFSVTYQLISKVCPLMISRNHCVLKQNPEGQWTIMDNKSLNGVWLNRERL) folds into the FHA domain. The interval 68–72 (QNPEG) is required for interaction with PIWIL1. A disordered region spans residues 135-195 (CLAPKNDHTT…PEKLHGKGEA (61 aa)). At serine 157 the chain carries Phosphoserine. Residues 184 to 193 (AEPEKLHGKG) show a composition bias toward basic and acidic residues. The RING-type zinc-finger motif lies at 405 to 443 (CIICSEYFIEAVTLNCAHSFCSFCISEWMKRKVECPICR).

The protein belongs to the RNF8 family. In terms of assembly, homodimer. Forms a E2-E3 ubiquitin ligase complex composed of the RNF8 homodimer and a E2 heterodimer of UBE2N and UBE2V2. Interacts with class III E2s, including UBE2E1, UBE2E2, and UBE2E3 and with UBE2N. Interacts with RXRA. Interacts (via FHA domain) with phosphorylated HERC2 (via C-terminus). Interacts with PIWIL1; leading to sequester RNF8 in the cytoplasm. Interacts with WRAP53/TCAB1. Autoubiquitinated through 'Lys-48' and 'Lys-63' of ubiquitin. 'Lys-63' polyubiquitination is mediated by UBE2N. 'Lys-29'-type polyubiquitination is also observed, but it doesn't require its own functional RING-type zinc finger.

Its subcellular location is the nucleus. It localises to the cytoplasm. It is found in the midbody. The protein localises to the chromosome. The protein resides in the telomere. The catalysed reaction is S-ubiquitinyl-[E2 ubiquitin-conjugating enzyme]-L-cysteine + [acceptor protein]-L-lysine = [E2 ubiquitin-conjugating enzyme]-L-cysteine + N(6)-ubiquitinyl-[acceptor protein]-L-lysine.. Its pathway is protein modification; protein ubiquitination. E3 ubiquitin-protein ligase that plays a key role in DNA damage signaling via 2 distinct roles: by mediating the 'Lys-63'-linked ubiquitination of histones H2A and H2AX and promoting the recruitment of DNA repair proteins at double-strand breaks (DSBs) sites, and by catalyzing 'Lys-48'-linked ubiquitination to remove target proteins from DNA damage sites. Following DNA DSBs, it is recruited to the sites of damage by ATM-phosphorylated MDC1 and catalyzes the 'Lys-63'-linked ubiquitination of histones H2A and H2AX, thereby promoting the formation of TP53BP1 and BRCA1 ionizing radiation-induced foci (IRIF). Also controls the recruitment of UIMC1-BRCC3 (RAP80-BRCC36) and PAXIP1/PTIP to DNA damage sites. Promotes the recruitment of NBN to DNA damage sites by catalyzing 'Lys-6'-linked ubiquitination of NBN. Also recruited at DNA interstrand cross-links (ICLs) sites and catalyzes 'Lys-63'-linked ubiquitination of histones H2A and H2AX, leading to recruitment of FAAP20 and Fanconi anemia (FA) complex, followed by interstrand cross-link repair. H2A ubiquitination also mediates the ATM-dependent transcriptional silencing at regions flanking DSBs in cis, a mechanism to avoid collision between transcription and repair intermediates. Promotes the formation of 'Lys-63'-linked polyubiquitin chains via interactions with the specific ubiquitin-conjugating UBE2N/UBC13 and ubiquitinates non-histone substrates such as PCNA. Substrates that are polyubiquitinated at 'Lys-63' are usually not targeted for degradation. Also catalyzes the formation of 'Lys-48'-linked polyubiquitin chains via interaction with the ubiquitin-conjugating UBE2L6/UBCH8, leading to degradation of substrate proteins such as CHEK2, JMJD2A/KDM4A and KU80/XRCC5: it is still unclear how the preference toward 'Lys-48'- versus 'Lys-63'-linked ubiquitination is regulated but it could be due to RNF8 ability to interact with specific E2 specific ligases. For instance, interaction with phosphorylated HERC2 promotes the association between RNF8 and UBE2N/UBC13 and favors the specific formation of 'Lys-63'-linked ubiquitin chains. Promotes non-homologous end joining (NHEJ) by promoting the 'Lys-48'-linked ubiquitination and degradation the of KU80/XRCC5. Following DNA damage, mediates the ubiquitination and degradation of JMJD2A/KDM4A in collaboration with RNF168, leading to unmask H4K20me2 mark and promote the recruitment of TP53BP1 at DNA damage sites. Following DNA damage, mediates the ubiquitination and degradation of POLD4/p12, a subunit of DNA polymerase delta. In the absence of POLD4, DNA polymerase delta complex exhibits higher proofreading activity. In addition to its function in damage signaling, also plays a role in higher-order chromatin structure by mediating extensive chromatin decondensation. Involved in the activation of ATM by promoting histone H2B ubiquitination, which indirectly triggers histone H4 'Lys-16' acetylation (H4K16ac), establishing a chromatin environment that promotes efficient activation of ATM kinase. Required in the testis, where it plays a role in the replacement of histones during spermatogenesis. At uncapped telomeres, promotes the joining of deprotected chromosome ends by inducing H2A ubiquitination and TP53BP1 recruitment, suggesting that it may enhance cancer development by aggravating telomere-induced genome instability in case of telomeric crisis. Promotes the assembly of RAD51 at DNA DSBs in the absence of BRCA1 and TP53BP1 Also involved in class switch recombination in immune system, via its role in regulation of DSBs repair. May be required for proper exit from mitosis after spindle checkpoint activation and may regulate cytokinesis. May play a role in the regulation of RXRA-mediated transcriptional activity. Not involved in RXRA ubiquitination by UBE2E2. In Rattus norvegicus (Rat), this protein is E3 ubiquitin-protein ligase RNF8.